The chain runs to 348 residues: Flagellar P-ring protein (348 aa).

The N-terminal stretch at 1 to 16 (MRVLTIFLLFMTSIFA) is a signal peptide.

This sequence belongs to the FlgI family. The basal body constitutes a major portion of the flagellar organelle and consists of four rings (L,P,S, and M) mounted on a central rod.

It is found in the periplasm. Its subcellular location is the bacterial flagellum basal body. Assembles around the rod to form the L-ring and probably protects the motor/basal body from shearing forces during rotation. The chain is Flagellar P-ring protein from Campylobacter jejuni subsp. doylei (strain ATCC BAA-1458 / RM4099 / 269.97).